The chain runs to 116 residues: Signal recognition particle 14 kDa protein (116 aa).

The protein belongs to the SRP14 family. In terms of assembly, heterodimer with ZK512.4/SRP9; binds RNA as heterodimer. Component of a signal recognition particle (SRP) complex that consists of a 7SL RNA molecule of 300 nucleotides and six protein subunits: srpa-72, srpa-68, SRP54, F37F2.2/SRP19, F25G6.8/SRP14 and ZK512.4/SRP9.

It is found in the cytoplasm. Its function is as follows. Component of the signal recognition particle (SRP) complex, a ribonucleoprotein complex that mediates the cotranslational targeting of secretory and membrane proteins to the endoplasmic reticulum (ER). F37F2.2/srpa-19 together with F25G6.8/srpa-14 and the Alu portion of the SRP RNA, constitutes the elongation arrest domain of SRP. The complex of F37F2.2/srpa-19 and F25G6.8/srpa-14 is required for SRP RNA binding. The sequence is that of Signal recognition particle 14 kDa protein from Caenorhabditis elegans.